Consider the following 266-residue polypeptide: Glucosamine-6-phosphate deaminase (266 aa).

Residue Asp72 is the Proton acceptor; for enolization step of the active site. Catalysis depends on Asp141, which acts as the For ring-opening step. The active-site Proton acceptor; for ring-opening step is the His143. Glu148 (for ring-opening step) is an active-site residue.

It belongs to the glucosamine/galactosamine-6-phosphate isomerase family. NagB subfamily. Homohexamer.

It carries out the reaction alpha-D-glucosamine 6-phosphate + H2O = beta-D-fructose 6-phosphate + NH4(+). Its pathway is amino-sugar metabolism; N-acetylneuraminate degradation; D-fructose 6-phosphate from N-acetylneuraminate: step 5/5. Allosterically activated by N-acetylglucosamine 6-phosphate (GlcNAc6P). Its function is as follows. Catalyzes the reversible isomerization-deamination of glucosamine 6-phosphate (GlcN6P) to form fructose 6-phosphate (Fru6P) and ammonium ion. The protein is Glucosamine-6-phosphate deaminase of Aliivibrio fischeri (strain ATCC 700601 / ES114) (Vibrio fischeri).